The following is a 230-amino-acid chain: Large ribosomal subunit protein uL1 (230 aa).

Belongs to the universal ribosomal protein uL1 family. Part of the 50S ribosomal subunit.

Functionally, binds directly to 23S rRNA. The L1 stalk is quite mobile in the ribosome, and is involved in E site tRNA release. Its function is as follows. Protein L1 is also a translational repressor protein, it controls the translation of the L11 operon by binding to its mRNA. The chain is Large ribosomal subunit protein uL1 from Bifidobacterium adolescentis (strain ATCC 15703 / DSM 20083 / NCTC 11814 / E194a).